The sequence spans 895 residues: Plasma membrane ATPase 1 (895 aa).

Positions 1–53 (MSATEPTNEKVDKIVSDDEDEDIDQLVADLQSNPGAGDEEEEEENDSSFKAVP) are disordered. At 1–92 (MSATEPTNEK…AEEQENLVLK (92 aa)) the chain is on the cytoplasmic side. Residues 7 to 16 (TNEKVDKIVS) are compositionally biased toward basic and acidic residues. Acidic residues predominate over residues 37–46 (GDEEEEEEND). Residues 93 to 113 (FVMFFVGPIQFVMEAAAVLAA) traverse the membrane as a helical segment. Residues 114 to 117 (GLED) lie on the Extracellular side of the membrane. Residues 118–137 (WVDFGVICALLLLNAFVGFI) traverse the membrane as a helical segment. At 138 to 268 (QEYQAGSIVD…GTGHFTEVLN (131 aa)) the chain is on the cytoplasmic side. Residues 269 to 290 (GIGTTLLVFVIVTLLVVWVACF) form a helical membrane-spanning segment. Over 291–301 (YRTVRIVPILR) the chain is Extracellular. A helical membrane pass occupies residues 302-324 (YTLAITIIGVPVGLPAVVTTTMA). Residues 325-696 (VGAAYLAKKQ…IAILNRSLDI (372 aa)) lie on the Cytoplasmic side of the membrane. D355 (4-aspartylphosphate intermediate) is an active-site residue. 2 residues coordinate Mg(2+): D611 and D615. The helical transmembrane segment at 697–715 (NLIVFIAIFADVATLAIAY) threads the bilayer. The Extracellular segment spans residues 716 to 731 (DNAPYDPKPVKWNLPR). The helical transmembrane segment at 732 to 751 (LWGMSIVLGIILAIGTWITL) threads the bilayer. At 752–801 (TTMLLPKGGIIQNFGGLDGILFLQISLTENWLIFVTRAQGPFWSSIPSWQ) the chain is on the cytoplasmic side. Residues 802-822 (LSGAVLIVDIIATCFTLFGWW) traverse the membrane as a helical segment. The Extracellular portion of the chain corresponds to 823–834 (SQNWTDIVTVVR). Residues 835-851 (TWIWSFGVFCVMGGAYY) traverse the membrane as a helical segment. The Cytoplasmic portion of the chain corresponds to 852–895 (LMSTSEAFDNFCNGRKPQQHTDKRSLEDFLVSMQRVSTQHEKST).

Belongs to the cation transport ATPase (P-type) (TC 3.A.3) family. Type IIIA subfamily.

Its subcellular location is the cell membrane. It carries out the reaction ATP + H2O + H(+)(in) = ADP + phosphate + 2 H(+)(out). In terms of biological role, the plasma membrane ATPase of plants and fungi is a hydrogen ion pump. The proton gradient it generates drives the active transport of nutrients by H(+)-symport. The resulting external acidification and/or internal alkinization may mediate growth responses. In Candida albicans (Yeast), this protein is Plasma membrane ATPase 1 (PMA1).